We begin with the raw amino-acid sequence, 321 residues long: 5,10-methylenetetrahydromethanopterin reductase (321 aa).

This sequence belongs to the mer family.

The protein resides in the cytoplasm. It catalyses the reaction 5-methyl-5,6,7,8-tetrahydromethanopterin + oxidized coenzyme F420-(gamma-L-Glu)(n) + H(+) = 5,10-methylenetetrahydromethanopterin + reduced coenzyme F420-(gamma-L-Glu)(n). Its pathway is one-carbon metabolism; methanogenesis from CO(2); methyl-coenzyme M from 5,10-methylene-5,6,7,8-tetrahydromethanopterin: step 1/2. Functionally, catalyzes the reversible reduction of methylene-H(4)MPT to methyl-H(4)MPT. The sequence is that of 5,10-methylenetetrahydromethanopterin reductase from Methanothermobacter thermautotrophicus (strain ATCC 29096 / DSM 1053 / JCM 10044 / NBRC 100330 / Delta H) (Methanobacterium thermoautotrophicum).